An 819-amino-acid polypeptide reads, in one-letter code: Leucine--tRNA ligase (819 aa).

The short motif at proline 42–histidine 52 is the 'HIGH' region element. Positions lysine 576–serine 580 match the 'KMSKS' region motif. Lysine 579 provides a ligand contact to ATP.

It belongs to the class-I aminoacyl-tRNA synthetase family.

The protein resides in the cytoplasm. The catalysed reaction is tRNA(Leu) + L-leucine + ATP = L-leucyl-tRNA(Leu) + AMP + diphosphate. This chain is Leucine--tRNA ligase, found in Nitrosococcus oceani (strain ATCC 19707 / BCRC 17464 / JCM 30415 / NCIMB 11848 / C-107).